The chain runs to 114 residues: Probable divalent-cation tolerance protein cutA homolog (114 aa).

Belongs to the CutA family. Homotrimer.

This is Probable divalent-cation tolerance protein cutA homolog from Encephalitozoon cuniculi (strain GB-M1) (Microsporidian parasite).